A 323-amino-acid chain; its full sequence is Aquaporin-2 (323 aa).

Helical transmembrane passes span F32–R54, Y74–G96, and C103–A123. The short motif at N85–A87 is the NPA 1 element. N-linked (GlcNAc...) asparagine glycosylation is present at N143. 2 consecutive transmembrane segments (helical) span residues G161–V181 and F193–G213. An NPA 2 motif is present at residues N217–S219. The chain crosses the membrane as a helical span at residues Y243 to I263. N292 carries an N-linked (GlcNAc...) asparagine glycan.

This sequence belongs to the MIP/aquaporin (TC 1.A.8) family.

The protein resides in the cell membrane. The catalysed reaction is H2O(in) = H2O(out). The enzyme catalyses glycerol(in) = glycerol(out). Its function is as follows. Aquaglyceroporin that may modulate the water content and osmolytes during anhydrobiosis. The protein is Aquaporin-2 of Milnesium tardigradum (Water bear).